We begin with the raw amino-acid sequence, 123 residues long: Fluoride-specific ion channel FluC (123 aa).

4 helical membrane-spanning segments follow: residues 7 to 27 (LAVAAGGALGALFRFYLSGLL), 39 to 59 (MVNGLASFILGYLYGLLFWGF), 68 to 88 (FLGTGFCGGLSTFSTFSYETF), and 101 to 121 (LNVAANVFVTISLVFIGFLLA). Gly-75 and Ser-78 together coordinate Na(+).

Belongs to the fluoride channel Fluc/FEX (TC 1.A.43) family.

It localises to the cell membrane. It catalyses the reaction fluoride(in) = fluoride(out). Na(+) is not transported, but it plays an essential structural role and its presence is essential for fluoride channel function. Its function is as follows. Fluoride-specific ion channel. Important for reducing fluoride concentration in the cell, thus reducing its toxicity. This Thermococcus gammatolerans (strain DSM 15229 / JCM 11827 / EJ3) protein is Fluoride-specific ion channel FluC.